Reading from the N-terminus, the 386-residue chain is Succinate--CoA ligase [ADP-forming] subunit beta (386 aa).

The ATP-grasp domain maps to 9–244; that stretch reads KDLLTSYQLP…PSQENIRDVL (236 aa). ATP contacts are provided by residues K46, 53 to 55, V102, and E107; that span reads GRG. Mg(2+) contacts are provided by N199 and D213. Residues N264 and 321–323 each bind substrate; that span reads GIM.

It belongs to the succinate/malate CoA ligase beta subunit family. As to quaternary structure, heterotetramer of two alpha and two beta subunits. Mg(2+) serves as cofactor.

It catalyses the reaction succinate + ATP + CoA = succinyl-CoA + ADP + phosphate. The enzyme catalyses GTP + succinate + CoA = succinyl-CoA + GDP + phosphate. It functions in the pathway carbohydrate metabolism; tricarboxylic acid cycle; succinate from succinyl-CoA (ligase route): step 1/1. Succinyl-CoA synthetase functions in the citric acid cycle (TCA), coupling the hydrolysis of succinyl-CoA to the synthesis of either ATP or GTP and thus represents the only step of substrate-level phosphorylation in the TCA. The beta subunit provides nucleotide specificity of the enzyme and binds the substrate succinate, while the binding sites for coenzyme A and phosphate are found in the alpha subunit. The chain is Succinate--CoA ligase [ADP-forming] subunit beta from Chlamydia muridarum (strain MoPn / Nigg).